We begin with the raw amino-acid sequence, 337 residues long: Large ribosomal subunit protein uL3 (337 aa).

The tract at residues methionine 1 to alanine 20 is disordered.

Belongs to the universal ribosomal protein uL3 family. In terms of assembly, part of the 50S ribosomal subunit. Forms a cluster with proteins L14 and L24e.

In terms of biological role, one of the primary rRNA binding proteins, it binds directly near the 3'-end of the 23S rRNA, where it nucleates assembly of the 50S subunit. In Methanosarcina mazei (strain ATCC BAA-159 / DSM 3647 / Goe1 / Go1 / JCM 11833 / OCM 88) (Methanosarcina frisia), this protein is Large ribosomal subunit protein uL3.